We begin with the raw amino-acid sequence, 119 residues long: Dihydroneopterin aldolase (119 aa).

Residues E21, Y53, and 72-73 each bind substrate; that span reads VE. The Proton donor/acceptor role is filled by K98.

Belongs to the DHNA family.

It carries out the reaction 7,8-dihydroneopterin = 6-hydroxymethyl-7,8-dihydropterin + glycolaldehyde. Its pathway is cofactor biosynthesis; tetrahydrofolate biosynthesis; 2-amino-4-hydroxy-6-hydroxymethyl-7,8-dihydropteridine diphosphate from 7,8-dihydroneopterin triphosphate: step 3/4. Catalyzes the conversion of 7,8-dihydroneopterin to 6-hydroxymethyl-7,8-dihydropterin. This is Dihydroneopterin aldolase (folB) from Streptomyces coelicolor (strain ATCC BAA-471 / A3(2) / M145).